Consider the following 141-residue polypeptide: Hemoglobin subunit alpha (141 aa).

The Globin domain occupies 1–141 (VLSPADKTNV…VSTVLTSKYR (141 aa)). Serine 3 is subject to Phosphoserine. Lysine 7 carries the post-translational modification N6-succinyllysine. Phosphothreonine is present on threonine 8. Lysine 11 carries the N6-succinyllysine modification. At lysine 16 the chain carries N6-acetyllysine; alternate. Lysine 16 is modified (N6-succinyllysine; alternate). Tyrosine 24 is modified (phosphotyrosine). Serine 35 is modified (phosphoserine). Lysine 40 carries the post-translational modification N6-succinyllysine. The residue at position 49 (serine 49) is a Phosphoserine. Histidine 58 is an O2 binding site. Heme b is bound at residue histidine 87. A Phosphoserine modification is found at serine 102. Threonine 108 bears the Phosphothreonine mark. Residues serine 124 and serine 131 each carry the phosphoserine modification. 2 positions are modified to phosphothreonine: threonine 134 and threonine 137. Serine 138 carries the post-translational modification Phosphoserine.

The protein belongs to the globin family. As to quaternary structure, heterotetramer of two alpha chains and two beta chains. As to expression, red blood cells.

Involved in oxygen transport from the lung to the various peripheral tissues. Functionally, hemopressin acts as an antagonist peptide of the cannabinoid receptor CNR1. Hemopressin-binding efficiently blocks cannabinoid receptor CNR1 and subsequent signaling. This Gorilla gorilla gorilla (Western lowland gorilla) protein is Hemoglobin subunit alpha (HBA).